A 329-amino-acid chain; its full sequence is uncharacterized protein (329 aa).

The SIS domain maps to 38–184; it reads IVKLILKSQE…MACLMRAKNF (147 aa). 56–61 contacts ATP; sequence GVGKSA. 2 consecutive CBS domains span residues 211–267 and 276–329; these read QTTN…GLSL and TLKP…GLKA.

It belongs to the SIS family. GutQ/KpsF subfamily.

This is an uncharacterized protein from Helicobacter pylori (strain J99 / ATCC 700824) (Campylobacter pylori J99).